An 80-amino-acid chain; its full sequence is U19-lycotoxin-Ls1b (80 aa).

An N-terminal signal peptide occupies residues 1–22 (MSPKVQALIFIVGLITLLAAHA). Positions 23-34 (QEELSDNIESER) are excised as a propeptide. Cystine bridges form between Cys-36–Cys-50, Cys-43–Cys-55, Cys-49–Cys-66, and Cys-57–Cys-64.

This sequence belongs to the neurotoxin 02 (plectoxin) family. 05 (U19-lycotoxin) subfamily. Expressed by the venom gland.

It localises to the secreted. This Lycosa singoriensis (Wolf spider) protein is U19-lycotoxin-Ls1b.